Reading from the N-terminus, the 268-residue chain is Undecaprenyl-diphosphatase 1 (268 aa).

7 helical membrane-spanning segments follow: residues 5–25 (SIIS…IPVS), 43–63 (GNTF…LVYF), 84–104 (LAVL…HDFI), 107–127 (VLFE…FILL), 184–204 (AAEF…VLDL), 218–238 (LIAV…RSLL), and 247–267 (APFA…LLVI).

The protein belongs to the UppP family.

The protein resides in the cell inner membrane. The enzyme catalyses di-trans,octa-cis-undecaprenyl diphosphate + H2O = di-trans,octa-cis-undecaprenyl phosphate + phosphate + H(+). Its function is as follows. Catalyzes the dephosphorylation of undecaprenyl diphosphate (UPP). Confers resistance to bacitracin. The chain is Undecaprenyl-diphosphatase 1 from Agrobacterium fabrum (strain C58 / ATCC 33970) (Agrobacterium tumefaciens (strain C58)).